The following is a 576-amino-acid chain: Arginine--tRNA ligase (576 aa).

Residues 122–132 (PNVAKEMHVGH) carry the 'HIGH' region motif.

It belongs to the class-I aminoacyl-tRNA synthetase family. In terms of assembly, monomer.

The protein resides in the cytoplasm. The enzyme catalyses tRNA(Arg) + L-arginine + ATP = L-arginyl-tRNA(Arg) + AMP + diphosphate. This is Arginine--tRNA ligase from Pectobacterium carotovorum subsp. carotovorum (strain PC1).